We begin with the raw amino-acid sequence, 240 residues long: Proteasome subunit beta type-1 (240 aa).

Met-1 is modified (N-acetylmethionine). Positions 1–27 (MLSTAAYRDVERELGMGPHGSAGPVQL) are excised as a propeptide. O-linked (GlcNAc) serine glycosylation is present at Ser-57. 2 positions are modified to phosphoserine: Ser-61 and Ser-67. The residue at position 149 (Tyr-149) is a Phosphotyrosine. At Ser-161 the chain carries Phosphoserine. Position 203 is an N6-acetyllysine (Lys-203). Residue Ser-208 is glycosylated (O-linked (GlcNAc) serine).

The protein belongs to the peptidase T1B family. As to quaternary structure, the 26S proteasome consists of a 20S proteasome core and two 19S regulatory subunits. The 20S proteasome core is a barrel-shaped complex made of 28 subunits that are arranged in four stacked rings. The two outer rings are each formed by seven alpha subunits, and the two inner rings are formed by seven beta subunits. The proteolytic activity is exerted by three beta-subunits PSMB5, PSMB6 and PSMB7. Interacts with SERPINB2. Interacts with RFPL4A. Detected in liver (at protein level).

The protein localises to the cytoplasm. The protein resides in the nucleus. In terms of biological role, non-catalytic component of the 20S core proteasome complex involved in the proteolytic degradation of most intracellular proteins. This complex plays numerous essential roles within the cell by associating with different regulatory particles. Associated with two 19S regulatory particles, forms the 26S proteasome and thus participates in the ATP-dependent degradation of ubiquitinated proteins. The 26S proteasome plays a key role in the maintenance of protein homeostasis by removing misfolded or damaged proteins that could impair cellular functions, and by removing proteins whose functions are no longer required. Associated with the PA200 or PA28, the 20S proteasome mediates ubiquitin-independent protein degradation. This type of proteolysis is required in several pathways including spermatogenesis (20S-PA200 complex) or generation of a subset of MHC class I-presented antigenic peptides (20S-PA28 complex). This Mus musculus (Mouse) protein is Proteasome subunit beta type-1 (Psmb1).